We begin with the raw amino-acid sequence, 321 residues long: Phospho-N-acetylmuramoyl-pentapeptide-transferase (321 aa).

10 helical membrane passes run 6-26 (ALIPIVSSCAMTIAAMPLFIG), 50-70 (GTPTMGGLVFLVAAILTGIWV), 82-102 (LFILLFVLALYGVIGFLDDFI), 118-138 (LLGQIIGGIIFYLVYRSEGYP), 143-163 (FFGIELPLGLFYGVFAIFWLV), 175-195 (IDGLVAGLGTISFATYGIIAW), 200-220 (YDVLVICLSVLGGLLGFFAYN), 226-246 (IFMGDVGSLALGGLLAAISIM), 251-271 (WTLLLVGLIYVMETASVMLQV), and 301-321 (IDIIFWLVSIVTSLITLWFIW).

It belongs to the glycosyltransferase 4 family. MraY subfamily. The cofactor is Mg(2+).

Its subcellular location is the cell membrane. The enzyme catalyses UDP-N-acetyl-alpha-D-muramoyl-L-alanyl-gamma-D-glutamyl-L-lysyl-D-alanyl-D-alanine + di-trans,octa-cis-undecaprenyl phosphate = Mur2Ac(oyl-L-Ala-gamma-D-Glu-L-Lys-D-Ala-D-Ala)-di-trans,octa-cis-undecaprenyl diphosphate + UMP. It participates in cell wall biogenesis; peptidoglycan biosynthesis. Catalyzes the initial step of the lipid cycle reactions in the biosynthesis of the cell wall peptidoglycan: transfers peptidoglycan precursor phospho-MurNAc-pentapeptide from UDP-MurNAc-pentapeptide onto the lipid carrier undecaprenyl phosphate, yielding undecaprenyl-pyrophosphoryl-MurNAc-pentapeptide, known as lipid I. The sequence is that of Phospho-N-acetylmuramoyl-pentapeptide-transferase from Enterococcus hirae.